The chain runs to 486 residues: Protein ZINC INDUCED FACILITATOR 1 (486 aa).

Helical transmembrane passes span 41–61, 82–102, 109–129, 131–151, 170–190, 212–232, 288–308, 327–347, 362–384, 391–408, 423–443, and 461–481; these read FVWIIVLSTSLPISSLYPFLY, FVGCSFMLGRALTSVFWGIVA, PIILLGTISIAIFNALFGLSS, FWMAIGTRFLLGSFNCLLGTM, AVSTAWGIGLIIGPALGGFLA, ALPCFTISAFALLVTVLCCFI, IIVYCVLCLHDTAYSEIFALW, TVLAISGLGLFSFQVFVYPLA, ALMIPIQMSYPFIAGLSGLSLSL, ILINVLSVSAITGLLILQ, IAMTAMSLFKTVGPAGAGILF, and VFFVLNVIVVVGVALTFKPFL.

Belongs to the major facilitator superfamily. In terms of tissue distribution, strongly expressed in developing leaves, differentiating zones of root tips and sepals of developing flowers. Restricted to vascular tissues in older leaves, mature roots, flowers, anthers and filaments. Not expressed in developing anthers.

The protein localises to the vacuole membrane. Major facilitator superfamily (MFS) transporter involved in zinc tolerance by participating in vacuolar sequestration of zinc. The polypeptide is Protein ZINC INDUCED FACILITATOR 1 (ZIF1) (Arabidopsis thaliana (Mouse-ear cress)).